Consider the following 519-residue polypeptide: (3S,6E)-nerolidol synthase 1 (519 aa).

Residues aspartate 273, aspartate 277, aspartate 417, serine 421, and glutamate 425 each coordinate Mg(2+). A DDXXD motif motif is present at residues 273-277; the sequence is DDIFD.

The protein belongs to the terpene synthase family. Tpsg subfamily. Mg(2+) is required as a cofactor. It depends on Mn(2+) as a cofactor. In terms of tissue distribution, expressed in receptacle tissue. Not detected in leaves or green fruit.

The protein localises to the cytoplasm. It localises to the cytosol. It carries out the reaction (2E,6E)-farnesyl diphosphate + H2O = (3S,6E)-nerolidol + diphosphate. It functions in the pathway secondary metabolite biosynthesis; terpenoid biosynthesis. Functionally, involved in monoterpene (C10) and sesquiterpene (C15) biosynthesis. Converts geranyl diphosphate (GPP) into S-linalool and farnesyl diphosphate (FPP) into (3S)-E-nerolidol. Exclusively present and highly expressed in the fruit of cultivated (octaploid) varieties. This chain is (3S,6E)-nerolidol synthase 1, found in Fragaria ananassa (Strawberry).